The sequence spans 524 residues: Portal protein (524 aa).

The stretch at 486–516 (AMKDILQMTDEEIEQEAKQIEEESKEARFQD) forms a coiled coil. The segment covering 500–516 (QEAKQIEEESKEARFQD) has biased composition (basic and acidic residues). Residues 500 to 524 (QEAKQIEEESKEARFQDPDQEQEDF) are disordered.

It belongs to the Tevenvirinae portal protein family. In terms of assembly, homododecamer. Interacts with the large terminase subunit. Interacts with the major capsid protein. Interacts with the capsid vertex protein.

It is found in the virion. It localises to the host cell inner membrane. Forms the portal vertex of the capsid. This portal plays critical roles in head assembly, genome packaging, neck/tail attachment, and genome ejection. The portal protein multimerizes as a single ring-shaped homododecamer arranged around a central channel. Binds to the terminase subunits to form the packaging machine. Attaches to the host inner membrane most likely through interaction with host yidC and forms together with chaperone gp40 an initiator complex to form the prohead. This Enterobacteria phage T4 (Bacteriophage T4) protein is Portal protein (20).